The primary structure comprises 199 residues: Adenylyl-sulfate kinase (199 aa).

35-42 (GLSGSGKS) provides a ligand contact to ATP. Residue serine 109 is the Phosphoserine intermediate of the active site.

The protein belongs to the APS kinase family.

The catalysed reaction is adenosine 5'-phosphosulfate + ATP = 3'-phosphoadenylyl sulfate + ADP + H(+). It participates in sulfur metabolism; hydrogen sulfide biosynthesis; sulfite from sulfate: step 2/3. In terms of biological role, catalyzes the synthesis of activated sulfate. This Clostridium kluyveri (strain ATCC 8527 / DSM 555 / NBRC 12016 / NCIMB 10680 / K1) protein is Adenylyl-sulfate kinase.